We begin with the raw amino-acid sequence, 308 residues long: MGFKGYILSIVFNGKDFANKYYLMLKEFLKQHNLRDKIALKVVLANDEPASNLYVSIKSRVAKEIGLNVEVIKFSANSVQSDILEVIDRENKNLSTDGIIVQLPLLKGMDLNSILNSIVYSKDVDGLSFVNLGKMILGDKKGFIPCTALAVLKILRDEGIKTLGKTVVVVGRSPLVGRPISILLSSKPYDATVIACHSKSIYLDVYLRQADIVISAVGKPRLIDKSMLCGKPYVIDIGISEIETDNGKILSGDTDFDNIKECVKFITPVKGGIGPVTVLMLMFNTIKAHLINNRMFDVLNRLEKLLEV.

NADP(+)-binding positions include 171–173, Ser198, and Ile239; that span reads GRS.

This sequence belongs to the tetrahydrofolate dehydrogenase/cyclohydrolase family. As to quaternary structure, homodimer.

The enzyme catalyses (6R)-5,10-methylene-5,6,7,8-tetrahydrofolate + NADP(+) = (6R)-5,10-methenyltetrahydrofolate + NADPH. The catalysed reaction is (6R)-5,10-methenyltetrahydrofolate + H2O = (6R)-10-formyltetrahydrofolate + H(+). It participates in one-carbon metabolism; tetrahydrofolate interconversion. Its function is as follows. Catalyzes the oxidation of 5,10-methylenetetrahydrofolate to 5,10-methenyltetrahydrofolate and then the hydrolysis of 5,10-methenyltetrahydrofolate to 10-formyltetrahydrofolate. The polypeptide is Bifunctional protein FolD (Borreliella burgdorferi (strain ZS7) (Borrelia burgdorferi)).